Here is a 353-residue protein sequence, read N- to C-terminus: UPF0283 membrane protein YcjF (353 aa).

The span at 1-19 shows a compositional bias: basic and acidic residues; the sequence is MSEPLKPRIDFAEPLKEEP. The segment at 1–35 is disordered; it reads MSEPLKPRIDFAEPLKEEPTSAFKAQQTFSEAESR. The next 3 membrane-spanning stretches (helical) occupy residues 70-90, 100-120, and 213-233; these read MVMG…VQWT, VALG…GSVV, and ESTL…FIAW.

It belongs to the UPF0283 family.

It localises to the cell inner membrane. The sequence is that of UPF0283 membrane protein YcjF from Salmonella paratyphi A (strain AKU_12601).